The sequence spans 965 residues: Receptor-like protein 15 (965 aa).

The N-terminal stretch at 1–23 (MEGKVFLGHNLIWVMLLMGQLHG) is a signal peptide. The Extracellular portion of the chain corresponds to 24–916 (YKSCIDEEKI…GVEADESIID (893 aa)). Residues asparagine 57, asparagine 95, asparagine 109, and asparagine 145 are each glycosylated (N-linked (GlcNAc...) asparagine). 17 LRR repeats span residues 80 to 102 (EISF…LHPF), 103 to 127 (EDVR…GYKS), 131 to 154 (LRKL…FLSA), 156 to 179 (TSLT…ELRD), 180 to 204 (LTNL…ELSS), 206 to 230 (RKLK…KFCT), 243 to 267 (LNNM…LTSL), 268 to 290 (TGLR…SLGS), 292 to 315 (QSLE…SLAN), 316 to 341 (LSNL…SWKP), 342 to 365 (KFQL…LLHQ), 366 to 389 (KDLR…LLAN), 391 to 415 (TKLK…AHNL), 417 to 435 (FLDV…NIGW), 437 to 461 (FPHL…LGNM), 462 to 485 (NGIQ…FVNG), and 487 to 512 (YSMA…NFTN). Asparagine 194 is a glycosylation site (N-linked (GlcNAc...) asparagine). Residue asparagine 315 is glycosylated (N-linked (GlcNAc...) asparagine). Asparagine 377 and asparagine 389 each carry an N-linked (GlcNAc...) asparagine glycan. N-linked (GlcNAc...) asparagine glycosylation is present at asparagine 444. N-linked (GlcNAc...) asparagine glycosylation is present at asparagine 509. The LRR 18; degenerate repeat unit spans residues 514–533 (LGLFMDNNLFTGKIGQGLRS). LRR repeat units lie at residues 534–557 (LINL…WIGE), 558–582 (LPSL…LFNK), 584–606 (SLQL…HDSR), 608–627 (GVVL…DTLL), 628–652 (ANVE…NIQN), 654–674 (SILL…LCGL), 675–698 (SNIQ…LSNT), 778–801 (LKLL…EFGG), 802–825 (LLEL…SISS), 827–850 (EKME…LTEL), and 851–875 (TSLS…QFNT). Residues asparagine 546 and asparagine 581 are each glycosylated (N-linked (GlcNAc...) asparagine). Residues asparagine 652, asparagine 662, asparagine 688, and asparagine 697 are each glycosylated (N-linked (GlcNAc...) asparagine). N-linked (GlcNAc...) asparagine glycans are attached at residues asparagine 809 and asparagine 814. Asparagine 862, asparagine 893, and asparagine 898 each carry an N-linked (GlcNAc...) asparagine glycan. A helical transmembrane segment spans residues 917 to 937 (MVSFYLSFAAAYVTILIGILA). The Cytoplasmic segment spans residues 938–965 (SLSFDSPWSRFWFYKVDAFIKKVRNLLL).

The protein belongs to the RLP family.

Its subcellular location is the cell membrane. This is Receptor-like protein 15 from Arabidopsis thaliana (Mouse-ear cress).